Consider the following 952-residue polypeptide: Bifunctional ent-kaurene synthase (952 aa).

The DXDD B-type cyclization motif motif lies at 328-331; that stretch reads DVDD. Residues aspartate 668, glutamate 672, asparagine 848, aspartate 849, serine 852, and aspartate 856 each contribute to the Mg(2+) site. Positions 668-672 match the DEXXE A-type cyclization motif motif; sequence DEYME.

The protein belongs to the terpene synthase family. Requires Mg(2+) as cofactor.

The enzyme catalyses ent-copalyl diphosphate = ent-kaur-16-ene + diphosphate. The catalysed reaction is (2E,6E,10E)-geranylgeranyl diphosphate = ent-copalyl diphosphate. It participates in plant hormone biosynthesis; gibberellin biosynthesis. Bifunctional ent-kaurene synthase; part of the gene cluster that mediates the biosynthesis of gibberellins (GAs), diterpenoids that may provide a selective advantage during infection of the preferred host plant, rice. Gibberellins (GAs) are diterpenoids and are synthesized via the mevalonate pathway. Biosynthesis of the major metabolite GA3 (gibberellic acid) from geranylgeranyl diphosphate (GGPP) requires 13 steps. The GGPP produced by the geranylgeranyl diphosphate synthase GGS2 is converted to ent-kaurene via ent-copalyldiphosphate in a two-step cyclization reaction performed by the bifunctional ent-copalyl diphosphate synthase/ent-kaurene synthase enzyme (CPS/KS). Ent-Kaurene is metabolized to GAs by a series of oxidation reactions catalyzed by cytochrome P450 monooxygenases. Cytochrome P450 monooxygenase P450-4 is an ent-kaurene oxidase that catalyzes the three oxidation steps between ent-kaurene and ent-kaurenoic acid. The highly multifunctional cytochrome P450 monooxygenase P450-1 then catalyzes four steps involving oxidation at two carbon atoms, in the main pathway from ent-kaurenoic acid to GA14 via GA12-aldehyde as well as producing kaurenolides and fujenoic acids as by-products. The cytochrome P450 monooxygenase P450-2 then converts GA14 to GA4 by removal of C-20. GA4 is further converted to GA7 by the GA4 desaturase DES via 1,2-desaturation before cytochrome P450 monooxygenase P450-3, a 13-hydroxylase, hydroxylates GA7 to GA3, the final product of the GA-biosynthetic pathway. This is Bifunctional ent-kaurene synthase from Gibberella fujikuroi (strain CBS 195.34 / IMI 58289 / NRRL A-6831) (Bakanae and foot rot disease fungus).